A 531-amino-acid chain; its full sequence is Unconventional prefoldin RPB5 interactor (531 aa).

Met-1 is modified (N-acetylmethionine). Disordered stretches follow at residues 1 to 24 (MEPP…APLR), 224 to 381 (ELES…ELPA), 408 to 470 (KSRS…SGVS), and 500 to 531 (TIPE…QQRS). The segment covering 13-24 (PLAEASAAAPLR) has biased composition (low complexity). Composition is skewed to polar residues over residues 257–266 (SPVTDSSAAS) and 280–296 (GQVN…NSYH). Acidic residues predominate over residues 300–319 (DDDEEEEDDDDDDDEDDDNE). Ser-369 bears the Phosphoserine; by RPS6KB1 mark. The span at 414–424 (NSVCSDTSESS) shows a compositional bias: polar residues. Ser-439 is subject to Phosphoserine.

This sequence belongs to the RNA polymerase II subunit 5-mediating protein family. As to quaternary structure, homodimer. Component of the PAQosome complex which is responsible for the biogenesis of several protein complexes and which consists of R2TP complex members RUVBL1, RUVBL2, RPAP3 and PIH1D1, URI complex members PFDN2, PFDN6, PDRG1, UXT and URI1 as well as ASDURF, POLR2E and DNAAF10/WDR92. Interacts with POLR2E/RPB5, RUVBL2 and RUVBL1. Interacts with PFDN2, PFDN4 and STAP1; the interactions are phosphorylation-dependent and occur in a growth-dependent manner in the mitochondrion. Interacts with UXT. Interacts with PPP1CC; the interaction is phosphorylation-dependent and occurs in a growth factor-dependent manner. Interacts (via the middle C-terminal region) with GTF2F1 and GTF2F2. Interacts with DMAP1. Interacts with TSC1 and TSC2. Interacts with PRPF8 and EFTUD2 in a ZNHIT2-dependent manner. Post-translationally, phosphorylation occurs in response to androgen treatment in prostate cancer cells in a mTOR-dependent manner. Phosphorylated; hyperhosphorylated in mitochondria in a mTORC-dependent signaling pathway. Phosphorylated at Ser-369 by RPS6KB1 in a growth factor- and rapamycin-dependent manner. S6K1-mediated mitochondrial phosphorylation at Ser-369 disrupts the URI1-PPP1CC complex in the mitochondrion, relieves PPP1CC phosphatase inhibition activity and hence engages a negative feedback diminishing RPS6KB1 kinase activity, preventing sustained S6K1-dependent signaling. Phosphorylated. Phosphorylation occurs essentially on serine residues. In terms of tissue distribution, expressed in the spinal cord, ganglia, choroid plexus and olfactors epithelium of the developing brain. Expressed in skin, lung, kidney, testis and muscles (at protein level). Expressed strongly in brain and kidney. Expressed weakly in skeletal muscle, lung and liver.

Its subcellular location is the nucleus. The protein localises to the cytoplasm. It is found in the mitochondrion. The protein resides in the cell projection. It localises to the dendrite. Involved in gene transcription regulation. Acts as a transcriptional repressor in concert with the corepressor UXT to regulate androgen receptor (AR) transcription. May act as a tumor suppressor to repress AR-mediated gene transcription and to inhibit anchorage-independent growth in prostate cancer cells. Required for cell survival in ovarian cancer cells. Together with UXT, associates with chromatin to the NKX3-1 promoter region. Functionally, plays a central role in maintaining S6K1 signaling and BAD phosphorylation under normal growth conditions thereby protecting cells from potential deleterious effects of sustained S6K1 signaling. The URI1-PPP1CC complex acts as a central component of a negative feedback mechanism that counteracts excessive S6K1 survival signaling to BAD in response to growth factors. Mediates inhibition of PPP1CC phosphatase activity in mitochondria. Coordinates the regulation of nutrient-sensitive gene expression availability in a mTOR-dependent manner. Seems to be a scaffolding protein able to assemble a prefoldin-like complex that contains PFDs and proteins with roles in transcription and ubiquitination. The sequence is that of Unconventional prefoldin RPB5 interactor (Uri1) from Mus musculus (Mouse).